We begin with the raw amino-acid sequence, 790 residues long: Phenylalanine--tRNA ligase beta subunit (790 aa).

Positions P39 to C154 constitute a tRNA-binding domain. Residues F404–P483 form the B5 domain. The Mg(2+) site is built by D457, D463, E466, and E467. Residues P694–S790 form the FDX-ACB domain.

The protein belongs to the phenylalanyl-tRNA synthetase beta subunit family. Type 1 subfamily. As to quaternary structure, tetramer of two alpha and two beta subunits. Mg(2+) serves as cofactor.

Its subcellular location is the cytoplasm. It catalyses the reaction tRNA(Phe) + L-phenylalanine + ATP = L-phenylalanyl-tRNA(Phe) + AMP + diphosphate + H(+). The chain is Phenylalanine--tRNA ligase beta subunit from Chlamydia trachomatis serovar A (strain ATCC VR-571B / DSM 19440 / HAR-13).